A 260-amino-acid polypeptide reads, in one-letter code: Lysine/arginine/ornithine-binding periplasmic protein (260 aa).

An N-terminal signal peptide occupies residues 1–22 (MKKSILALSLLVGLSTAASSYA). An L-arginine-binding site is contributed by Asp-33. Asp-33 lines the L-lysine pocket. Asp-33 contributes to the L-ornithine binding site. Cys-60 and Cys-67 form a disulfide bridge. Positions 91, 92, 94, 99, 143, and 183 each coordinate L-arginine. L-ornithine-binding residues include Ser-91, Ser-92, Ser-94, Arg-99, Thr-143, and Asp-183. L-lysine contacts are provided by Ser-92, Ser-94, Arg-99, and Thr-143.

Belongs to the bacterial solute-binding protein 3 family. The complex is composed of two ATP-binding proteins (HisP), two transmembrane proteins (HisM and HisQ) and a solute-binding protein (ArgT).

It is found in the periplasm. Functionally, part of the ABC transporter complex HisPMQ-ArgT involved in lysine/arginine/ornithine transport. Binds lysine, arginine and ornithine. Stimulates ATPase activity of HisP. The chain is Lysine/arginine/ornithine-binding periplasmic protein (argT) from Escherichia coli (strain K12).